Reading from the N-terminus, the 104-residue chain is Large ribosomal subunit protein uL24 (104 aa).

Belongs to the universal ribosomal protein uL24 family. As to quaternary structure, part of the 50S ribosomal subunit.

In terms of biological role, one of two assembly initiator proteins, it binds directly to the 5'-end of the 23S rRNA, where it nucleates assembly of the 50S subunit. Functionally, one of the proteins that surrounds the polypeptide exit tunnel on the outside of the subunit. The polypeptide is Large ribosomal subunit protein uL24 (Clostridium botulinum (strain Eklund 17B / Type B)).